Reading from the N-terminus, the 62-residue chain is MARKCFFTGKGPMVGNNVSHANNKTKKRSLPNLRTVRVKLEDGTTVKLRVAASTLRTMKKRS.

The protein belongs to the bacterial ribosomal protein bL28 family.

The chain is Large ribosomal subunit protein bL28 from Wolinella succinogenes (strain ATCC 29543 / DSM 1740 / CCUG 13145 / JCM 31913 / LMG 7466 / NCTC 11488 / FDC 602W) (Vibrio succinogenes).